A 702-amino-acid polypeptide reads, in one-letter code: Heparin-sulfate lyase (702 aa).

Positions 1 to 17 (MKNIFFICFCALFAFSG) are cleaved as a signal peptide. The active-site Proton acceptor is the Tyr-314.

It belongs to the polysaccharide lyase 12 family.

Its subcellular location is the periplasm. The enzyme catalyses Elimination of sulfate, appears to act on linkages between N-acetyl-D-glucosamine and uronate. Product is an unsaturated sugar.. Its function is as follows. Specifically cleaves heparan sulfate-rich regions of acidic polysaccharides. Does not act on N,O-desulfated glucosamine or N-acetyl-O-sulfated glucosamine linkages. Functions in cleaving metazoan heparan sulfate and providing carbon, nitrogen and sulfate sources for microorganisms. In Bacteroides thetaiotaomicron (strain ATCC 29148 / DSM 2079 / JCM 5827 / CCUG 10774 / NCTC 10582 / VPI-5482 / E50), this protein is Heparin-sulfate lyase (hepC).